Reading from the N-terminus, the 619-residue chain is Enolase 4 (619 aa).

Residues 173–184 (DKERKELEKSQE) show a composition bias toward basic and acidic residues. The tract at residues 173-236 (DKERKELEKS…PPEPPEPVLH (64 aa)) is disordered. Residues 188 to 206 (PAPPPVTLPPPPPPPPPPP) are compositionally biased toward pro residues. Glu-302 contributes to the substrate binding site. The disordered stretch occupies residues 333–354 (TLPPPKQETKKGHNGSKRAQPP). Catalysis depends on Lys-497, which acts as the Proton acceptor. Residue Lys-548 coordinates substrate.

The protein belongs to the enolase family. As to quaternary structure, interacts with ENO1. Isoform 1 and isoform 4 interact with AKAP4. Synthesized as an approximately 70-kDa precursor, which then undergoes proteolytic cleavage to an approximately 60-kDa enzyme; HOATZ associates directly or indirectly with ENO4 to mediate this process before its transport to mature flagella. In terms of tissue distribution, testis-specific. Expressed in spermatids and ependyma (at protein level). Expressed at higher levels in late spermatids than in pachytene spermatocytes. As to expression, expressed at higher levels in pachytene spermatocytes than in late spermatids.

The catalysed reaction is (2R)-2-phosphoglycerate = phosphoenolpyruvate + H2O. Its pathway is carbohydrate degradation; glycolysis; pyruvate from D-glyceraldehyde 3-phosphate: step 4/5. Its function is as follows. Required for sperm motility, function and male fertility. May be involved in the normal assembly of the sperm fibrous sheath and provides most of the enolase activity in sperm. The polypeptide is Enolase 4 (Eno4) (Mus musculus (Mouse)).